The sequence spans 93 residues: Acylphosphatase (93 aa).

Cysteine 5 and cysteine 49 are disulfide-bonded. The Acylphosphatase-like domain occupies 5–93 (CTIAWIYGRV…ETLTDFSIRY (89 aa)). Catalysis depends on residues arginine 20 and asparagine 38.

Belongs to the acylphosphatase family.

It carries out the reaction an acyl phosphate + H2O = a carboxylate + phosphate + H(+). The protein is Acylphosphatase of Salmonella arizonae (strain ATCC BAA-731 / CDC346-86 / RSK2980).